Here is a 167-residue protein sequence, read N- to C-terminus: ATP synthase subunit b (167 aa).

The chain crosses the membrane as a helical span at residues 7–25; the sequence is SFLLAVSFVIFIYLIYRPA.

This sequence belongs to the ATPase B chain family. As to quaternary structure, F-type ATPases have 2 components, F(1) - the catalytic core - and F(0) - the membrane proton channel. F(1) has five subunits: alpha(3), beta(3), gamma(1), delta(1), epsilon(1). F(0) has three main subunits: a(1), b(2) and c(10-14). The alpha and beta chains form an alternating ring which encloses part of the gamma chain. F(1) is attached to F(0) by a central stalk formed by the gamma and epsilon chains, while a peripheral stalk is formed by the delta and b chains.

Its subcellular location is the cell inner membrane. F(1)F(0) ATP synthase produces ATP from ADP in the presence of a proton or sodium gradient. F-type ATPases consist of two structural domains, F(1) containing the extramembraneous catalytic core and F(0) containing the membrane proton channel, linked together by a central stalk and a peripheral stalk. During catalysis, ATP synthesis in the catalytic domain of F(1) is coupled via a rotary mechanism of the central stalk subunits to proton translocation. Its function is as follows. Component of the F(0) channel, it forms part of the peripheral stalk, linking F(1) to F(0). This is ATP synthase subunit b from Rickettsia typhi (strain ATCC VR-144 / Wilmington).